The following is a 198-amino-acid chain: MSLSIDVTSLPSISSSIYKNESSSTTSTLSGKSIGRSEQYISPDAEAFNKYMLSKSPEDIGPSDSASNDPLTSFSIRSNAVKTNADAGVSMDSSTQSRPSSNVGCDQVDFSFNKGIKMNANLDSSISISTNSKKEKSKNEHKSRKHYPKIEAESDSDDYVLDDSDSDDGKCKNCKYKRKYFALRMRMKQVAMQLIEDL.

Residues 16 to 30 show a composition bias toward low complexity; sequence SIYKNESSSTTSTLS. Disordered regions lie at residues 16 to 37, 53 to 72, 85 to 104, and 126 to 167; these read SIYKNESSSTTSTLSGKSIGRS, LSKSPEDIGPSDSASNDPLT, ADAGVSMDSSTQSRPSSNVG, and ISIS…SDSD. Residue Ser-67 is modified to Phosphoserine; by host CK1. A compositionally biased stretch (polar residues) spans 91-104; it reads MDSSTQSRPSSNVG. A Mg(2+)-binding site is contributed by Asp-92. Acidic residues predominate over residues 153 to 166; that stretch reads ESDSDDYVLDDSDS. 4 positions are modified to phosphoserine; by host: Ser-154, Ser-156, Ser-164, and Ser-166.

This sequence belongs to the rotavirus NSP5 family. As to quaternary structure, homodimer. Interacts with VP1. Interacts with VP2. Interacts with NSP2; this interaction leads to up-regulation of NSP5 hyperphosphorylation and formation of virus factories. Interacts with NSP6. Participates in the selective exclusion of host proteins from stress granules (SG) and P bodies (PB). Also participates in the sequestration of these remodeled organelles in viral factories. Mg(2+) is required as a cofactor. Post-translationally, O-glycosylated. Hyperphosphorylated on serine residues, when in dimeric form. Phosphorylation by host CK1 is required for the hyperphosphorylation of NSP5 dimer.

The protein localises to the host cytoplasm. Its function is as follows. Plays an essential role in the viral genome replication. Participates, together with NSP2, in the formation of viral factories (viroplasms), which are large inclusions in the host cytoplasm where replication intermediates are assembled and viral RNA replication takes place. Orchestrates the recruitment of viroplasmic proteins such as capsid proteins to these factories. Participates in the selective exclusion of host proteins from stress granules (SG) and P bodies (PB). Also participates in the sequestration of these remodeled organelles in viral factories. The protein is Non-structural protein 5 of Homo sapiens (Human).